The following is a 75-amino-acid chain: MDLFFEDSIIQELSLKFKISFEINEEEYQQLIELAFSQFIYPSNDNIEIKINTKELADNEKALLYEIQLWRTKKS.

This is an uncharacterized protein from Saccharolobus islandicus (Sulfolobus islandicus).